Reading from the N-terminus, the 1918-residue chain is Diacylglycerol kinase eta (1918 aa).

Over residues 1–10 (MAHLKLDTLH) the composition is skewed to basic and acidic residues. Residues 1 to 37 (MAHLKLDTLHVQRSPRGSRRSSPSSGRSSACSSGSIS) form a disordered region. The span at 20-37 (RSSPSSGRSSACSSGSIS) shows a compositional bias: low complexity. Positions 82–175 (AIIKEGFLLK…WLGGLKTATA (94 aa)) constitute a PH domain. Phorbol-ester/DAG-type zinc fingers lie at residues 195 to 245 (HHHW…IANC) and 268 to 319 (PHQW…AVAC). Residues 350-486 (GNFSPLLVFV…DRWSIMVFEK (137 aa)) form the DAGKc domain. 4 disordered regions span residues 783-805 (GANI…NTPT), 1017-1067 (TTLC…DDNP), 1177-1212 (PNTI…GDSI), and 1380-1399 (ERDK…TEEA). Residues 1177–1189 (PNTILTTSTSPTK) show a composition bias toward polar residues. Residues 1855 to 1918 (WSVNEVVTWL…LQAIKDLSEN (64 aa)) form the SAM domain.

Belongs to the eukaryotic diacylglycerol kinase family.

The protein localises to the cytoplasm. It carries out the reaction a 1,2-diacyl-sn-glycerol + ATP = a 1,2-diacyl-sn-glycero-3-phosphate + ADP + H(+). Phosphorylates diacylglycerol (DAG) to generate phosphatidic acid (PA). The chain is Diacylglycerol kinase eta from Drosophila erecta (Fruit fly).